The primary structure comprises 794 residues: Mitochondrial intermediate peptidase (794 aa).

The transit peptide at 1 to 39 (MRVTSSRLLQGGSLVSRVLKRRLNNASRTKKGWFSTRTL) directs the protein to the mitochondrion. H581 contributes to the Zn(2+) binding site. E582 is a catalytic residue. H585 and H588 together coordinate Zn(2+).

Belongs to the peptidase M3 family. Zn(2+) is required as a cofactor.

It localises to the mitochondrion matrix. It carries out the reaction Release of an N-terminal octapeptide as second stage of processing of some proteins imported into the mitochondrion.. Functionally, cleaves proteins, imported into the mitochondrion, to their mature size. While most mitochondrial precursor proteins are processed to the mature form in one step by mitochondrial processing peptidase (MPP), the sequential cleavage by MIP of an octapeptide after initial processing by MPP is a required step for a subgroup of nuclear-encoded precursor proteins destined for the matrix or the inner membrane. In Debaryomyces hansenii (strain ATCC 36239 / CBS 767 / BCRC 21394 / JCM 1990 / NBRC 0083 / IGC 2968) (Yeast), this protein is Mitochondrial intermediate peptidase (OCT1).